The primary structure comprises 307 residues: Nicotinamide/nicotinic acid mononucleotide adenylyltransferase 2 (307 aa).

The NAD(+) site is built by Ser-16 and Phe-17. His-24 provides a ligand contact to ATP. Trp-92 and Thr-95 together coordinate NAD(+). Residues Cys-164 and Cys-165 are each lipidated (S-palmitoyl cysteine). NAD(+)-binding residues include Gly-200, Asp-202, Leu-212, Trp-213, and Arg-232. 271 to 274 (TKSR) contributes to the ATP binding site.

This sequence belongs to the eukaryotic NMN adenylyltransferase family. In terms of assembly, monomer. The cofactor is Mg(2+). Post-translationally, degraded in response to injured neurite. Degradation is caused by polyubiquitination by MYCBP2 after recognition by FBXO45. In terms of processing, palmitoylated; palmitoylation is required for membrane association.

It is found in the golgi apparatus membrane. Its subcellular location is the cytoplasmic vesicle membrane. It localises to the cytoplasm. The protein resides in the cell projection. The protein localises to the axon. It carries out the reaction beta-nicotinamide D-ribonucleotide + ATP + H(+) = diphosphate + NAD(+). The enzyme catalyses nicotinate beta-D-ribonucleotide + ATP + H(+) = deamido-NAD(+) + diphosphate. It participates in cofactor biosynthesis; NAD(+) biosynthesis; NAD(+) from nicotinamide D-ribonucleotide: step 1/1. The protein operates within cofactor biosynthesis; NAD(+) biosynthesis; deamido-NAD(+) from nicotinate D-ribonucleotide: step 1/1. Inhibited by P1-(adenosine-5')-P3-(nicotinamide-riboside-5')-triphosphate (Np3AD) and P1-(adenosine-5')-P4-(nicotinamide-riboside-5')-tetraphosphate (Np4AD). Nicotinamide/nicotinate-nucleotide adenylyltransferase that acts as an axon maintenance factor. Axon survival factor required for the maintenance of healthy axons: acts by delaying Wallerian axon degeneration, an evolutionarily conserved process that drives the loss of damaged axons. Catalyzes the formation of NAD(+) from nicotinamide mononucleotide (NMN) and ATP. Can also use the deamidated form; nicotinic acid mononucleotide (NaMN) as substrate but with a lower efficiency. Cannot use triazofurin monophosphate (TrMP) as substrate. Also catalyzes the reverse reaction, i.e. the pyrophosphorolytic cleavage of NAD(+). For the pyrophosphorolytic activity prefers NAD(+), NADH and NaAD as substrates and degrades nicotinic acid adenine dinucleotide phosphate (NHD) less effectively. Fails to cleave phosphorylated dinucleotides NADP(+), NADPH and NaADP(+). Also acts as an activator of ADP-ribosylation by supporting the catalytic activity of PARP16 and promoting mono-ADP-ribosylation of ribosomes by PARP16. May be involved in the maintenance of axonal integrity. This chain is Nicotinamide/nicotinic acid mononucleotide adenylyltransferase 2 (Nmnat2), found in Rattus norvegicus (Rat).